The primary structure comprises 1385 residues: DNA-directed RNA polymerase subunit beta'' (1385 aa).

Zn(2+)-binding residues include C224, C294, C301, and C304.

The protein belongs to the RNA polymerase beta' chain family. RpoC2 subfamily. As to quaternary structure, in plastids the minimal PEP RNA polymerase catalytic core is composed of four subunits: alpha, beta, beta', and beta''. When a (nuclear-encoded) sigma factor is associated with the core the holoenzyme is formed, which can initiate transcription. Zn(2+) serves as cofactor.

It is found in the plastid. The protein resides in the chloroplast. It carries out the reaction RNA(n) + a ribonucleoside 5'-triphosphate = RNA(n+1) + diphosphate. Its function is as follows. DNA-dependent RNA polymerase catalyzes the transcription of DNA into RNA using the four ribonucleoside triphosphates as substrates. The protein is DNA-directed RNA polymerase subunit beta'' of Illicium oligandrum (Star anise).